The primary structure comprises 83 residues: MGMSPLTVKKLGFIFMIVSASALSVSFAGRPSIFVHKKINLREEMVERSMHEHERLLRMNTKDYGNNSPSPRLERPPFKLIPN.

The N-terminal stretch at 1 to 22 is a signal peptide; it reads MGMSPLTVKKLGFIFMIVSASA. Positions 59–83 are disordered; sequence MNTKDYGNNSPSPRLERPPFKLIPN. At Tyr-64 the chain carries Sulfotyrosine. A hydroxyproline mark is found at Pro-69 and Pro-71.

As to quaternary structure, interacts with the specific receptor kinases GSO1 and GSO2. Expressed exclusively in the root stele.

Peptide hormone required for contiguous Casparian strip diffusion barrier formation in roots via the regulation of CASPs protein expression and distribution in a GSO1-GSO2 signaling pathway. The Casparian strip is required for ion homeostasis (e.g. iron and potassium ions). This is Protein CASPARIAN STRIP INTEGRITY FACTOR 1 from Arabidopsis thaliana (Mouse-ear cress).